A 264-amino-acid chain; its full sequence is MAVGKNKRLTKGGKKGAKKKVVDPFSKKDWYDVKAPAMFNIRNIGKTLVTRTQGTKIASDGLKGRVFEVSLADLQNDEVAFRKFKLITEDVQGKNCLINFHGMDLTRDKMCSMVKKWQTMIEAHIDVKTTDGYLLRLFCVGFTKKRTNQIRKTSYAQHQQVRQIRKKMVEIMTREVQTNDLKEVVNKLIPDSIGKDIEKACQSIYPLHDVYVRKVKMLKKPKFELGKLMELHGEGGGSGKPSGDETGAKVERADGYEPPVQESV.

Residues 232-264 are disordered; sequence HGEGGGSGKPSGDETGAKVERADGYEPPVQESV. A compositionally biased stretch (basic and acidic residues) spans 242 to 255; sequence SGDETGAKVERADG.

The protein belongs to the eukaryotic ribosomal protein eS1 family. Component of the small ribosomal subunit. Mature ribosomes consist of a small (40S) and a large (60S) subunit. The 40S subunit contains about 33 different proteins and 1 molecule of RNA (18S). The 60S subunit contains about 49 different proteins and 3 molecules of RNA (28S, 5.8S and 5S). Part of the small subunit (SSU) processome, composed of more than 70 proteins and the RNA chaperone small nucleolar RNA (snoRNA) U3.

The protein resides in the cytoplasm. Its subcellular location is the nucleus. The protein localises to the nucleolus. Component of the small ribosomal subunit. The ribosome is a large ribonucleoprotein complex responsible for the synthesis of proteins in the cell. Part of the small subunit (SSU) processome, first precursor of the small eukaryotic ribosomal subunit. During the assembly of the SSU processome in the nucleolus, many ribosome biogenesis factors, an RNA chaperone and ribosomal proteins associate with the nascent pre-rRNA and work in concert to generate RNA folding, modifications, rearrangements and cleavage as well as targeted degradation of pre-ribosomal RNA by the RNA exosome. May play a role during erythropoiesis. The sequence is that of Small ribosomal subunit protein eS1 from Ophiophagus hannah (King cobra).